A 258-amino-acid chain; its full sequence is Synapse differentiation-inducing gene protein 1-like (258 aa).

Topologically, residues 1–182 (MESLSELQNP…FIVIPPRDHL (182 aa)) are extracellular. A helical transmembrane segment spans residues 183–203 (GLAIFSMLCCFWPLGIAAFYF). Over 204–228 (SQGTSKAVTKGDFPLASIASRRALF) the chain is Cytoplasmic. A helical membrane pass occupies residues 229–249 (LAALSITIGTGVYVGVVVALI). The Extracellular portion of the chain corresponds to 250–258 (AYLSKPGHI).

It belongs to the CD225/Dispanin family.

It is found in the membrane. The protein localises to the golgi apparatus. The protein resides in the cis-Golgi network. This chain is Synapse differentiation-inducing gene protein 1-like (syndig1l), found in Danio rerio (Zebrafish).